The primary structure comprises 371 residues: Protein IQ-DOMAIN 7 (371 aa).

A disordered region spans residues 1–32 (MGGSGNWIRSLISNRKPVNDQQEKLSDKSSKK). Over residues 17–29 (PVNDQQEKLSDKS) the composition is skewed to basic and acidic residues. 2 IQ domains span residues 93–121 (REWA…AVVR) and 122–144 (IQAI…CMQA). A calmodulin-binding region spans residues 125–141 (IFRGRQVRKQAAVTLRC). 2 disordered regions span residues 285–308 (SGMS…PVAF) and 327–371 (LTQS…SQRS). Composition is skewed to polar residues over residues 297 to 308 (STSSTSQSPVAF) and 327 to 341 (LTQS…SGLS).

It belongs to the IQD family. In terms of assembly, binds to multiple calmodulin (CaM) in the presence of Ca(2+) and CaM-like proteins.

The protein resides in the nucleus. Its subcellular location is the nucleus envelope. The protein localises to the cytoplasm. It localises to the cytoskeleton. Functionally, may be involved in cooperative interactions with calmodulins or calmodulin-like proteins. Recruits calmodulin proteins to microtubules, thus being a potential scaffold in cellular signaling and trafficking. May associate with nucleic acids and regulate gene expression at the transcriptional or post-transcriptional level. The sequence is that of Protein IQ-DOMAIN 7 from Arabidopsis thaliana (Mouse-ear cress).